A 689-amino-acid polypeptide reads, in one-letter code: Methionine--tRNA ligase (689 aa).

A 'HIGH' region motif is present at residues 15 to 25 (PYANGPIHLGH). 4 residues coordinate Zn(2+): C146, C149, C159, and C162. The short motif at 332 to 336 (KMSKS) is the 'KMSKS' region element. K335 contacts ATP. The tract at residues 554 to 574 (DAPKTAAPEKTAEASSVSSEP) is disordered. Residues 588–689 (DFAKIDLRIA…EGAQPGMRVK (102 aa)) form the tRNA-binding domain.

Belongs to the class-I aminoacyl-tRNA synthetase family. MetG type 1 subfamily. Homodimer. Requires Zn(2+) as cofactor.

Its subcellular location is the cytoplasm. The enzyme catalyses tRNA(Met) + L-methionine + ATP = L-methionyl-tRNA(Met) + AMP + diphosphate. Its function is as follows. Is required not only for elongation of protein synthesis but also for the initiation of all mRNA translation through initiator tRNA(fMet) aminoacylation. The protein is Methionine--tRNA ligase of Shewanella baltica (strain OS185).